Reading from the N-terminus, the 2628-residue chain is MRKLNSLFSLAVLLSLLCWGQTAAAQGGPKTAPSVTHQAVQKGIRTSKVKDLRDPIPAGMARIILEAHDVWEDGTGYQMLWDADHNQYGASIPEESFWFANGTIPAGLYDPFEYKVPVNADASFSPTNFVLDGTASADIPAGTYDYVIINPNPGIIYIVGEGVSKGNDYVVEAGKTYHFTVQRQGPGDAASVVVTGEGGNEFAPVQNLQWSVSGQTVTLTWQAPASDKRTYVLNESFDTQTLPNGWTMIDADGDGHNWLSTINVYNTATHTGDGAMFSKSWTASGGAKIDLSPDNYLVTPKVTVPENGKLSYWVSSQVPWTNEHYGVFLSTTGNEAANFTIKLLEETLGSDKPAPMNLVKSEGVKLPAPYQERTIDLSAYAGQQVYLAFRHFNSTGIFRLYLDDVAVSGEGSSNDYTYTVYRDNVVIAQNLAATTFNQENVAPGQYNYCVEVKYTAGVSPKVCKDVTVEGSNEFAHVQNLTGSAVGQKVTLKWDAPNGTPNPNPGTTTLSESFENGIPASWKTIDADGDGNNWTTTPPPGGTSFAGHNSAICASSASYINFEGPQNPDNYLVTPELSLPNGGTLTFWVCAQDANYASEHYAVYASSTGNDASNFANALLEEVLTAKTVVTAPEAIRGTRVQGTWYQKTVQLPAGTKYVAFRHFGCTDFFWINLDDVEIKANGKRADFTETFESSTHGEAPAEWTTIDADGDGQGWLCLSSGQLDWLTAHGGTNVVASFSWNGMALNPDNYLISKDVTGATKVKYYYAVNDGFPGDHYAVMISKTGTNAGDFTVVFEETPNGINKGGARFGLSTEADGAKPQSVWIERTVDLPAGTKYVAFRHYNCSDLNYILLDDIQFTMGGSPTPTDYTYTVYRDGTKIKEGLTETTFEEDGVATGNHEYCVEVKYTAGVSPKECVNVTVDPVQFNPVQNLTGSAVGQKVTLKWDAPNGTPNPNPNPNPGTTTLSESFENGIPASWKTIDADGDGNNWTTTPPPGGTSFAGHNSAICASSASYINFEGPQNPDNYLVTPELSLPNGGTLTFWVCAQDANYASEHYAVYASSTGNDASNFANALLEEVLTAKTVVTAPEAIRGTRVQGTWYQKTVQLPAGTKYVAFRHFGCTDFFWINLDDVEIKANGKRADFTETFESSTHGEAPAEWTTIDADGDGQGWLCLSSGQLGWLTAHGGTNVVASFSWNGMALNPDNYLISKDVTGATKVKYYYAVNDGFPGDHYAVMISKTGTNAGDFTVVFEETPNGINKGGARFGLSTEADGAKPQSVWIERTVDLPAGTKYVAFRHYNCSDLNYILLDDIQFTMGGSPTPTDYTYTVYRDGTKIKEGLTETTFEEDGVATGNHEYCVEVKYTAGVSPKECVNVTVDPVQFNPVQNLTGSAVGQKVTLKWDAPNGTPNPNPNPNPGTTTLSESFENGIPASWKTIDADGDGNNWTTTPPPGGTSFAGHNSAICASSASYINFEGPQNPDNYLVTPELSLPNGGTLTFWVCAQDANYASEHYAVYASSTGNDASNFANALLEEVLTAKTVVTAPEAIRGTRVQGTWYQKTVQLPAGTKYVAFRHFGCTDFFWINLDDVEIKANGKRADFTETFESSTHGEAPAEWTTIDADGDGQGWLCLSSGQLGWLTAHGGTNVVASFSWNGMALNPDNYLISKDVTGATKVKYYYAVNDGFPGDHYAVMISKTGTNAGDFTVVFEETPNGINKGGARFGLSTEADGAKPQSVWIERTVDLPAGTKYVAFRHYNCSDLNYILLDDIQFTMGGSPTPTDYTYTVYRDGTKIKEGLTETTFEEDGVATGNHEYCVEVKYTAGVSPKECVNVTVDPVQFNPVQNLTGSAVGQKVTLKWDAPNGTPNPNPNPNPGTTTLSESFENGIPASWKTIDADGDGNNWTTTPPPGGTSFAGHNSAICVSSASYINFEGPQNPDNYLVTPELSLPGGGTLTFWVCAQDANYASEHYAVYASSTGNDASNFANALLEEVLTAKTVVTAPEAIRGTRVQGTWYQKTVQLPAGTKYVAFRHFGCTDFFWINLDEVEIKANGKRADFTETFESSTHGEAPAEWTTIDADGDGQGWLCLSSGQLDWLTAHGGTNVVASFSWNGMALNPDNYLISKDVTGATKVKYYYAVNDGFPGDHYAVMISKTGTNAGDFTVVFEETPNGINKGGARFGLSTEADGAKPQSVWIERTVDLPAGTKYVAFRHYNCSDLNYILLDDIQFTMGGSPTPTDYTYTVYRDGTKIKEGLTETTFEEDGVATGNHEYCVEVKYTAGVSPKVCVNVTINPTQFNPVQNLTAEQAPNSMDAILKWNAPASKRAEVLNEDFENGIPSSWKTIDADGDGNNWTTTPPPGGSSFAGHNSAICVSSASYINFEGPQNPDNYLVTPELSLPGGGTLTFWVCAQDANYASEHYAVYASSTGNDASNFANALLEEVLTAKTVVTAPEAIRGTRVQGTWYQKTVQLPAGTKYVAFRHFGCTDFFWINLDDVVITSGNAPSYTYTIYRNNTQIASGVTETTYRDPDLATGFYTYGVKVVYPNGESAIETATLNITSLADVTAQKPYTLTVVGKTITVTCQGEAMIYDMNGRRLAAGRNTVVYTAQGGHYAVMVVVDGKSYVEKLAVK.

The first 24 residues, 1 to 24, serve as a signal peptide directing secretion; sequence MRKLNSLFSLAVLLSLLCWGQTAA. Peptidase C25-like stretches follow at residues 25-539, 540-995, 996-1451, 1452-1907, and 2074-2628; these read AQGG…TPPP, GGTS…TPPP, and IDAD…LAVK. Disordered stretches follow at residues 493–512, 520–546, 944–1002, 1400–1458, 1856–1881, 1890–1909, and 2336–2358; these read WDAP…LSES, SWKT…SFAG, KWDA…SFAG, KWDA…SESF, KTID…PPGG, and SSWK…PPGG. Positions 496–508 are enriched in low complexity; sequence PNGTPNPNPGTTT.

It belongs to the peptidase C25 family.

In terms of biological role, agglutinates erythrocytes. The sequence is that of Hemagglutinin A (hagA) from Porphyromonas gingivalis (Bacteroides gingivalis).